Reading from the N-terminus, the 72-residue chain is uncharacterized protein (72 aa).

The chain crosses the membrane as a helical span at residues 41–58 (FSFLVHIMCGLTLTSYVI).

The protein localises to the membrane. This is an uncharacterized protein from Dictyostelium discoideum (Social amoeba).